A 717-amino-acid chain; its full sequence is Photosystem I P700 chlorophyll a apoprotein A1 (717 aa).

Helical transmembrane passes span 58–81 (VFSA…FHGA), 144–167 (LYCT…FHYH), 183–207 (LNHH…HVSL), 279–297 (IAHH…GHMY), 334–357 (WHAQ…HHMY), 373–399 (LSLF…IFMV), 421–443 (AIIS…LYIH), and 519–537 (FLVH…LILL). Positions 561 and 570 each coordinate [4Fe-4S] cluster. Helical transmembrane passes span 577 to 598 (HVFL…HFSW) and 652 to 674 (LSAY…MFLF). Residue H663 participates in chlorophyll a' binding. M671 and Y679 together coordinate chlorophyll a. Residue W680 coordinates phylloquinone. Residues 712 to 717 (AVGVTH) traverse the membrane as a helical segment.

This sequence belongs to the PsaA/PsaB family. As to quaternary structure, the PsaA/B heterodimer binds the P700 chlorophyll special pair and subsequent electron acceptors. PSI consists of a core antenna complex that captures photons, and an electron transfer chain that converts photonic excitation into a charge separation. The eukaryotic PSI reaction center is composed of at least 11 subunits. The cofactor is P700 is a chlorophyll a/chlorophyll a' dimer, A0 is one or more chlorophyll a, A1 is one or both phylloquinones and FX is a shared 4Fe-4S iron-sulfur center..

It localises to the plastid. The protein resides in the chloroplast thylakoid membrane. It catalyses the reaction reduced [plastocyanin] + hnu + oxidized [2Fe-2S]-[ferredoxin] = oxidized [plastocyanin] + reduced [2Fe-2S]-[ferredoxin]. PsaA and PsaB bind P700, the primary electron donor of photosystem I (PSI), as well as the electron acceptors A0, A1 and FX. PSI is a plastocyanin-ferredoxin oxidoreductase, converting photonic excitation into a charge separation, which transfers an electron from the donor P700 chlorophyll pair to the spectroscopically characterized acceptors A0, A1, FX, FA and FB in turn. Oxidized P700 is reduced on the lumenal side of the thylakoid membrane by plastocyanin. This Drimys winteri (Winter's bark) protein is Photosystem I P700 chlorophyll a apoprotein A1.